The chain runs to 382 residues: Lactosylceramide 1,3-N-acetyl-beta-D-glucosaminyltransferase B (382 aa).

Topologically, residues 1–13 (MAVLKMPRFKKYH) are cytoplasmic. The helical; Signal-anchor for type II membrane protein transmembrane segment at 14 to 30 (LRLMITCFSTLLLMTYW) threads the bilayer. The Lumenal portion of the chain corresponds to 31-382 (EKIDNCVVTH…CKAAFFEEDT (352 aa)). N-linked (GlcNAc...) asparagine glycans are attached at residues asparagine 57, asparagine 112, asparagine 167, and asparagine 276.

It belongs to the glycosyltransferase 31 family.

It localises to the golgi apparatus membrane. It catalyses the reaction a beta-D-Gal-(1-&gt;4)-beta-D-Glc-(1&lt;-&gt;1)-Cer(d18:1(4E)) + UDP-N-acetyl-alpha-D-glucosamine = a beta-D-GlcNAc-(1-&gt;3)-beta-D-Gal-(1-&gt;4)-beta-D-Glc-(1&lt;-&gt;1)-Cer(d18:1(4E)) + UDP + H(+). The enzyme catalyses a neolactoside nLc4Cer(d18:1(4E)) + UDP-N-acetyl-alpha-D-glucosamine = a neolactoside IV(3)-beta-GlcNAc-nLc4Cer(d18:1(4E)) + UDP + H(+). Its pathway is protein modification; protein glycosylation. Its function is as follows. Beta-1,3-N-acetylglucosaminyltransferase that plays a key role in the synthesis of lacto- or neolacto-series carbohydrate chains on glycolipids. The sequence is that of Lactosylceramide 1,3-N-acetyl-beta-D-glucosaminyltransferase B (b3gnt5b) from Danio rerio (Zebrafish).